A 35-amino-acid polypeptide reads, in one-letter code: PSPTRRSKSRSKSRSRSRSASAGKAAKRAKSKTAK.

2 stretches are compositionally biased toward basic residues: residues 1–17 and 25–35; these read PSPT…RSRS and AAKRAKSKTAK. The interval 1–35 is disordered; it reads PSPTRRSKSRSKSRSRSRSASAGKAAKRAKSKTAK.

In terms of tissue distribution, sperm.

Its subcellular location is the nucleus. It is found in the chromosome. Involved in nuclear basic protein transition: histones are replaced by spermatid specific proteins which are themselves replaced by protamines in late spermatids. This chain is Sperm-specific protein Phi-1, found in Mytilus californianus (California mussel).